Consider the following 159-residue polypeptide: 2-C-methyl-D-erythritol 2,4-cyclodiphosphate synthase (159 aa).

Residues Asp-8 and His-10 each coordinate a divalent metal cation. Residues Asp-8–His-10 and His-34–Ser-35 each bind 4-CDP-2-C-methyl-D-erythritol 2-phosphate. His-42 serves as a coordination point for a divalent metal cation. 4-CDP-2-C-methyl-D-erythritol 2-phosphate is bound by residues Asp-56–Gly-58, Phe-61–Asp-65, Ala-100–Ala-106, Thr-132–Glu-135, Phe-139, and Arg-142.

This sequence belongs to the IspF family. In terms of assembly, homotrimer. A divalent metal cation is required as a cofactor.

It carries out the reaction 4-CDP-2-C-methyl-D-erythritol 2-phosphate = 2-C-methyl-D-erythritol 2,4-cyclic diphosphate + CMP. It participates in isoprenoid biosynthesis; isopentenyl diphosphate biosynthesis via DXP pathway; isopentenyl diphosphate from 1-deoxy-D-xylulose 5-phosphate: step 4/6. Functionally, involved in the biosynthesis of isopentenyl diphosphate (IPP) and dimethylallyl diphosphate (DMAPP), two major building blocks of isoprenoid compounds. Catalyzes the conversion of 4-diphosphocytidyl-2-C-methyl-D-erythritol 2-phosphate (CDP-ME2P) to 2-C-methyl-D-erythritol 2,4-cyclodiphosphate (ME-CPP) with a corresponding release of cytidine 5-monophosphate (CMP). The polypeptide is 2-C-methyl-D-erythritol 2,4-cyclodiphosphate synthase (Alkaliphilus metalliredigens (strain QYMF)).